The sequence spans 207 residues: LexA repressor (207 aa).

The segment at residues 33–52 (VKEMSETFGISHASVHDRIN) is a DNA-binding region (H-T-H motif). Residues Ser-129 and Lys-166 each act as for autocatalytic cleavage activity in the active site.

Belongs to the peptidase S24 family. Homodimer.

The catalysed reaction is Hydrolysis of Ala-|-Gly bond in repressor LexA.. Its function is as follows. Represses a number of genes involved in the response to DNA damage (SOS response), including recA and lexA. In the presence of single-stranded DNA, RecA interacts with LexA causing an autocatalytic cleavage which disrupts the DNA-binding part of LexA, leading to derepression of the SOS regulon and eventually DNA repair. The protein is LexA repressor of Oleidesulfovibrio alaskensis (strain ATCC BAA-1058 / DSM 17464 / G20) (Desulfovibrio alaskensis).